The sequence spans 304 residues: N-acetyl-D-glucosamine kinase (304 aa).

ATP-binding positions include 4 to 11 (GFDMGGTK) and 133 to 140 (GLGGGLVI). 4 residues coordinate Zn(2+): His-157, Cys-177, Cys-179, and Cys-184.

Belongs to the ROK (NagC/XylR) family. NagK subfamily.

The catalysed reaction is N-acetyl-D-glucosamine + ATP = N-acetyl-D-glucosamine 6-phosphate + ADP + H(+). It functions in the pathway cell wall biogenesis; peptidoglycan recycling. Catalyzes the phosphorylation of N-acetyl-D-glucosamine (GlcNAc) derived from cell-wall degradation, yielding GlcNAc-6-P. The sequence is that of N-acetyl-D-glucosamine kinase from Pectobacterium carotovorum subsp. carotovorum (strain PC1).